The sequence spans 284 residues: Bifunctional protein FolD (284 aa).

Residues 165 to 167 and Ser-190 contribute to the NADP(+) site; that span reads GRS.

It belongs to the tetrahydrofolate dehydrogenase/cyclohydrolase family. In terms of assembly, homodimer.

It carries out the reaction (6R)-5,10-methylene-5,6,7,8-tetrahydrofolate + NADP(+) = (6R)-5,10-methenyltetrahydrofolate + NADPH. It catalyses the reaction (6R)-5,10-methenyltetrahydrofolate + H2O = (6R)-10-formyltetrahydrofolate + H(+). It participates in one-carbon metabolism; tetrahydrofolate interconversion. Its function is as follows. Catalyzes the oxidation of 5,10-methylenetetrahydrofolate to 5,10-methenyltetrahydrofolate and then the hydrolysis of 5,10-methenyltetrahydrofolate to 10-formyltetrahydrofolate. The protein is Bifunctional protein FolD of Streptococcus sanguinis (strain SK36).